A 145-amino-acid chain; its full sequence is Holo-[acyl-carrier-protein] synthase (145 aa).

Residues Asp-9 and Glu-63 each contribute to the Mg(2+) site.

Belongs to the P-Pant transferase superfamily. AcpS family. Mg(2+) is required as a cofactor.

It localises to the cytoplasm. It catalyses the reaction apo-[ACP] + CoA = holo-[ACP] + adenosine 3',5'-bisphosphate + H(+). Its function is as follows. Transfers the 4'-phosphopantetheine moiety from coenzyme A to a Ser of acyl-carrier-protein. This is Holo-[acyl-carrier-protein] synthase from Burkholderia vietnamiensis (strain G4 / LMG 22486) (Burkholderia cepacia (strain R1808)).